The primary structure comprises 156 residues: Small ribosomal subunit protein uS7 (156 aa).

It belongs to the universal ribosomal protein uS7 family. Part of the 30S ribosomal subunit. Contacts proteins S9 and S11.

Functionally, one of the primary rRNA binding proteins, it binds directly to 16S rRNA where it nucleates assembly of the head domain of the 30S subunit. Is located at the subunit interface close to the decoding center, probably blocks exit of the E-site tRNA. This chain is Small ribosomal subunit protein uS7, found in Salmonella agona (strain SL483).